The chain runs to 138 residues: Prefoldin subunit alpha (138 aa).

Belongs to the prefoldin subunit alpha family. As to quaternary structure, heterohexamer of two alpha and four beta subunits.

It localises to the cytoplasm. Functionally, molecular chaperone capable of stabilizing a range of proteins. Seems to fulfill an ATP-independent, HSP70-like function in archaeal de novo protein folding. This is Prefoldin subunit alpha from Methanosphaera stadtmanae (strain ATCC 43021 / DSM 3091 / JCM 11832 / MCB-3).